Reading from the N-terminus, the 466-residue chain is MSIASVASVFKGEHAVGSTVTVRGWVRTRRDSKAGISFLAVYDGSCFNPIQGVVPNSLENYDNEVLKLTAGCSVIVTGEIVESPGAGQAYELQVTHVEVTGWVEDPDTYPMAAKRHSIEHLRELAHLRPRTNIIGAVARVRNCLSQAIHRFYHENGFVWVSTPLITASDCEGAGEMFRVSTLDMENLPRTSDGKVDYDKDFFGKEAFLTVSGQLNGETYACALSKIYTFGPTFRAENSNTSRHLAEFWMVEPEVAFATLSDIASLAEGMLKYAFNAVLAERMDDLQFFAQHVDKTVIERLQSFVSSDFAQVDYTDAVDILQKCGREFEFPVSWGIDLSSEHERYLAEEHFKAPVVVKNYPKDIKAFYMRLNEDGKTVAAMDVLAPGIGEIIGGSQREERLDVLDMRLEEMDLNKEDYWWYRDLRRYGTVPHSGFGLGFERLVSYVTGVSNIRDVIPFPRAPRTANF.

Belongs to the class-II aminoacyl-tRNA synthetase family. As to quaternary structure, homodimer.

It is found in the cytoplasm. It catalyses the reaction tRNA(Asn) + L-asparagine + ATP = L-asparaginyl-tRNA(Asn) + AMP + diphosphate + H(+). This chain is Asparagine--tRNA ligase, found in Shewanella sp. (strain ANA-3).